The following is a 412-amino-acid chain: Phosphoglycerate kinase (412 aa).

Residues 24–26 (DLN), Arg-40, 63–66 (HLGR), Arg-122, and Arg-162 contribute to the substrate site. Residues Lys-212, Gly-300, Glu-331, and 360–363 (GGDS) contribute to the ATP site.

It belongs to the phosphoglycerate kinase family. In terms of assembly, monomer.

It localises to the cytoplasm. The catalysed reaction is (2R)-3-phosphoglycerate + ATP = (2R)-3-phospho-glyceroyl phosphate + ADP. It functions in the pathway carbohydrate degradation; glycolysis; pyruvate from D-glyceraldehyde 3-phosphate: step 2/5. In Mycobacterium bovis (strain ATCC BAA-935 / AF2122/97), this protein is Phosphoglycerate kinase (pgk).